A 210-amino-acid chain; its full sequence is Uridine kinase (210 aa).

An ATP-binding site is contributed by 13 to 20; that stretch reads GGSGSGKT.

It belongs to the uridine kinase family.

Its subcellular location is the cytoplasm. It carries out the reaction uridine + ATP = UMP + ADP + H(+). The catalysed reaction is cytidine + ATP = CMP + ADP + H(+). It functions in the pathway pyrimidine metabolism; CTP biosynthesis via salvage pathway; CTP from cytidine: step 1/3. Its pathway is pyrimidine metabolism; UMP biosynthesis via salvage pathway; UMP from uridine: step 1/1. This chain is Uridine kinase, found in Oceanobacillus iheyensis (strain DSM 14371 / CIP 107618 / JCM 11309 / KCTC 3954 / HTE831).